The chain runs to 533 residues: Beta-1,4 N-acetylgalactosaminyltransferase 1 (533 aa).

The Cytoplasmic portion of the chain corresponds to 1 to 7 (MRLDRRA). A helical; Signal-anchor for type II membrane protein membrane pass occupies residues 8–25 (LYALVLLLACASLGLLYA). The Lumenal portion of the chain corresponds to 26–533 (STRDAPGLPN…KHRLQCMTAE (508 aa)). N-linked (GlcNAc...) asparagine glycans are attached at residues Asn79 and Asn274. The cysteines at positions 429 and 476 are disulfide-linked.

This sequence belongs to the glycosyltransferase 2 family. Homodimer; disulfide-linked. As to expression, strongly expressed in brain, testis, spleen, and to a lesser extent in liver.

It localises to the golgi apparatus membrane. The catalysed reaction is a ganglioside GM3 (d18:1(4E)) + UDP-N-acetyl-alpha-D-galactosamine = a ganglioside GM2 (d18:1(4E)) + UDP + H(+). It carries out the reaction a ganglioside GD3 (d18:1(4E)) + UDP-N-acetyl-alpha-D-galactosamine = a ganglioside GD2 (d18:1(4E)) + UDP + H(+). The enzyme catalyses a ganglioside GM3 + UDP-N-acetyl-alpha-D-galactosamine = a ganglioside GM2 + UDP + H(+). It catalyses the reaction a ganglioside GD3 + UDP-N-acetyl-alpha-D-galactosamine = a ganglioside GD2 + UDP + H(+). The catalysed reaction is a ganglioside GD1a + UDP-N-acetyl-alpha-D-galactosamine = a ganglioside GalNAc-GD1a + UDP + H(+). It carries out the reaction a ganglioside GT3 (d18:1(4E)) + UDP-N-acetyl-alpha-D-galactosamine = a ganglioside GT2 (d18:1(4E)) + UDP + H(+). The enzyme catalyses a beta-D-Gal-(1-&gt;4)-beta-D-Glc-(1&lt;-&gt;1)-Cer(d18:1(4E)) + UDP-N-acetyl-alpha-D-galactosamine = a ganglioside GA2 (d18:1(4E)) + UDP + H(+). It catalyses the reaction a neolactoside IV(3)-alpha-NeuGc-nLc4Cer + UDP-N-acetyl-alpha-D-galactosamine = a neolactoside IV(4)-beta-GalNAc-IV(3)-alpha-NeuGc-nLc4Cer + UDP + H(+). The protein operates within sphingolipid metabolism. Involved in the biosynthesis of gangliosides GM2, GD2, GT2 and GA2 from GM3, GD3, GT3 and GA3, respectively. In Rattus norvegicus (Rat), this protein is Beta-1,4 N-acetylgalactosaminyltransferase 1.